Consider the following 78-residue polypeptide: Alpha-neurotoxin homolog 7 (78 aa).

The N-terminal stretch at 1-21 (MKTLLLTLVVVTIVCLDFGYT) is a signal peptide. 4 disulfide bridges follow: Cys24/Cys42, Cys37/Cys57, Cys59/Cys70, and Cys71/Cys76.

This sequence belongs to the three-finger toxin family. Short-chain subfamily. Orphan group XII sub-subfamily. Expressed by the venom gland.

It localises to the secreted. This is Alpha-neurotoxin homolog 7 from Micrurus corallinus (Brazilian coral snake).